The primary structure comprises 493 residues: MERKFSDQELIRRNHLQELKDQNKNPFLATKVERSMSLKDFAEEYKNFSKEELHNMDLKKVTLAGRLIGVRQTFGIIQDFSTKLQIYIDKKNVDPEVFSTFKSLDIGDIVELQGVAMKTNSDEITLNVTNIKLVAKSLKVLPEKYHGLVDEEIKARQRYLDLIVNDESKNTFIKRSLIIREMRNWLDSQGFFEVETPVLQDILSGAAARPFITHHNTLDKQYYLRIATEIALKKCIVGGFEKVYEIGRIFRNEGMDSTHNPEFTSVELYVAYVDLWYIMQLTEDLIRHIATKLKLLNPTFRGFSVDLNKPFKKAHMVDLINEHVGVNFFEVKSDEQALELAKKHHVKLLDHQKNFGHIVNAFFETFVEEKLIEPTFVYGHPVQVSPLTKKNQEDPRFVDRFELFICQKEFANAYSEINDPIDQYERFVAQLEEAKLGNDEANELDMEFIEALEYGMPPTGGLGIGVDRLVMLLTSNDSIRNVLLFPHMKDKAK.

2 residues coordinate Mg(2+): Glu402 and Glu409.

Belongs to the class-II aminoacyl-tRNA synthetase family. As to quaternary structure, homodimer. Requires Mg(2+) as cofactor.

It localises to the cytoplasm. It carries out the reaction tRNA(Lys) + L-lysine + ATP = L-lysyl-tRNA(Lys) + AMP + diphosphate. This chain is Lysine--tRNA ligase, found in Ureaplasma urealyticum serovar 10 (strain ATCC 33699 / Western).